Consider the following 417-residue polypeptide: Glutamyl-tRNA reductase (417 aa).

Substrate contacts are provided by residues 49 to 52 (TCNR), S105, 110 to 112 (ETQ), and Q116. Catalysis depends on C50, which acts as the Nucleophile. Position 185–190 (185–190 (GAGEMI)) interacts with NADP(+).

This sequence belongs to the glutamyl-tRNA reductase family. As to quaternary structure, homodimer.

It carries out the reaction (S)-4-amino-5-oxopentanoate + tRNA(Glu) + NADP(+) = L-glutamyl-tRNA(Glu) + NADPH + H(+). It functions in the pathway porphyrin-containing compound metabolism; protoporphyrin-IX biosynthesis; 5-aminolevulinate from L-glutamyl-tRNA(Glu): step 1/2. In terms of biological role, catalyzes the NADPH-dependent reduction of glutamyl-tRNA(Glu) to glutamate 1-semialdehyde (GSA). The sequence is that of Glutamyl-tRNA reductase from Chromobacterium violaceum (strain ATCC 12472 / DSM 30191 / JCM 1249 / CCUG 213 / NBRC 12614 / NCIMB 9131 / NCTC 9757 / MK).